Consider the following 173-residue polypeptide: ATP synthase subunit b (173 aa).

A helical membrane pass occupies residues 12–34; the sequence is AFGNLYAIGWSAVNFLVLLALMY.

This sequence belongs to the ATPase B chain family. F-type ATPases have 2 components, F(1) - the catalytic core - and F(0) - the membrane proton channel. F(1) has five subunits: alpha(3), beta(3), gamma(1), delta(1), epsilon(1). F(0) has three main subunits: a(1), b(2) and c(10-14). The alpha and beta chains form an alternating ring which encloses part of the gamma chain. F(1) is attached to F(0) by a central stalk formed by the gamma and epsilon chains, while a peripheral stalk is formed by the delta and b chains.

The protein resides in the cell membrane. In terms of biological role, f(1)F(0) ATP synthase produces ATP from ADP in the presence of a proton or sodium gradient. F-type ATPases consist of two structural domains, F(1) containing the extramembraneous catalytic core and F(0) containing the membrane proton channel, linked together by a central stalk and a peripheral stalk. During catalysis, ATP synthesis in the catalytic domain of F(1) is coupled via a rotary mechanism of the central stalk subunits to proton translocation. Functionally, component of the F(0) channel, it forms part of the peripheral stalk, linking F(1) to F(0). The chain is ATP synthase subunit b from Syntrophomonas wolfei subsp. wolfei (strain DSM 2245B / Goettingen).